We begin with the raw amino-acid sequence, 64 residues long: Large ribosomal subunit protein bL28 (64 aa).

The protein belongs to the bacterial ribosomal protein bL28 family.

In Campylobacter jejuni subsp. doylei (strain ATCC BAA-1458 / RM4099 / 269.97), this protein is Large ribosomal subunit protein bL28.